Reading from the N-terminus, the 252-residue chain is Putative pinene synthase (252 aa).

Belongs to the terpene synthase family. Tpsa subfamily.

This is Putative pinene synthase from Fragaria ananassa (Strawberry).